Here is a 289-residue protein sequence, read N- to C-terminus: Glycerol facilitator-aquaporin gla (289 aa).

The next 2 membrane-spanning stretches (helical) occupy residues 10-30 and 41-61; these read ITEFVGTALLIIMGNGAVANV and SWMIIGWGYGLGVMLPAVAFG. An NPA 1 motif is present at residues 68–70; it reads NPA. 3 helical membrane-spanning segments follow: residues 87-107, 151-171, and 209-229; these read AQYIIAQVLGAMFGQLLIVMV, FVGSFVLFFGAVAATNIFFGS, and MVAHLFLGFLVMGLVVALGGP. The short motif at 235–237 is the NPA 2 element; it reads NPA. A helical membrane pass occupies residues 264-284; the sequence is WYAWVPVLAPILASLAAVALF.

The protein belongs to the MIP/aquaporin (TC 1.A.8) family.

Its subcellular location is the cell membrane. Its function is as follows. Mixed channel protein that transports both water and glycerol. The chain is Glycerol facilitator-aquaporin gla (gla) from Lactococcus lactis subsp. lactis (strain IL1403) (Streptococcus lactis).